The chain runs to 232 residues: Small ribosomal subunit protein uS3 (232 aa).

Positions 39–107 (IRAFLKKKLY…EVNVNIKEER (69 aa)) constitute a KH type-2 domain. A disordered region spans residues 212–232 (VQPEKTEDDAPKKTRRPRRGK). A compositionally biased stretch (basic and acidic residues) spans 213-223 (QPEKTEDDAPK).

It belongs to the universal ribosomal protein uS3 family. Part of the 30S ribosomal subunit. Forms a tight complex with proteins S10 and S14.

Binds the lower part of the 30S subunit head. Binds mRNA in the 70S ribosome, positioning it for translation. This chain is Small ribosomal subunit protein uS3, found in Campylobacter curvus (strain 525.92).